A 556-amino-acid polypeptide reads, in one-letter code: Testis-specific protein 10-interacting protein (556 aa).

Residues 1–16 (MGQDTDMLNTYQQLVR) show a composition bias toward polar residues. Disordered regions lie at residues 1–31 (MGQDTDMLNTYQQLVRTPSVRPGQDVRLQAP), 50–102 (GCLG…LLPR), 123–155 (LQPSSPTPGHQALPMPSSFSQRQSRRKSTANLP), and 179–309 (GGVS…QWRK). The span at 208-219 (GSASDKQVQLQS) shows a compositional bias: polar residues. The span at 244-258 (SEEEQFSEATEEAEE) shows a compositional bias: acidic residues. Polar residues predominate over residues 289–301 (QGQSQGSSPSFNN). A coiled-coil region spans residues 379 to 464 (RQEATRSLLQ…LQGIQHRVQA (86 aa)). Residues 503–556 (AGKVDREGTPRKPRSHRSMGVRMEHSPQRPPRTEPTGSQPDRHYNPSLDPECSP) are disordered.

This is Testis-specific protein 10-interacting protein (TSGA10IP) from Homo sapiens (Human).